The following is a 349-amino-acid chain: Homeobox-leucine zipper protein HOX7 (349 aa).

A disordered region spans residues 42–186 (RATRRDEQDD…PKQKSDLANR (145 aa)). Composition is skewed to polar residues over residues 89–99 (SAETGSANSEM) and 121–135 (SSPS…RQQV). A DNA-binding region (homeobox) is located at residues 150-209 (GARKKLRLSKEQSSFLEDSFKEHSTLTPKQKSDLANRLNLRPRQVEVWFQNRRARTKLKQ). The span at 167 to 183 (DSFKEHSTLTPKQKSDL) shows a compositional bias: basic and acidic residues. The segment at 208–252 (KQTEVDCEHLKRCCERLTRENRRLQREVAELRGALRTTTSSYPPL) is leucine-zipper.

Belongs to the HD-ZIP homeobox family. Class II subfamily. In terms of assembly, homodimer. May form a heterodimer with HOX1, HOX2 or HOX3. In terms of tissue distribution, expressed in seedlings, roots, leaves, nodes, internodes, flowers and embryo.

It is found in the nucleus. Functionally, probable transcription factor that binds to the DNA sequence 5'-CAAT[GC]ATTG-3'. The sequence is that of Homeobox-leucine zipper protein HOX7 (HOX7) from Oryza sativa subsp. indica (Rice).